A 299-amino-acid polypeptide reads, in one-letter code: Circadian clock oscillator protein KaiA (299 aa).

The interval 9-148 is psR domain, binds oxidized quinones; the sequence is SRPQIFICTL…LQLSKACRLP (140 aa). In terms of domain architecture, KaiA N-terminal spans 9–179; the sequence is SRPQIFICTL…RLSQKLKERL (171 aa). The interval 180–188 is flexible linker; it reads GYLGVYYKR. The KaiA C-terminal domain occupies 189–297; it reads NPQQFFHKLT…CEMYRRSIPK (109 aa).

In terms of assembly, homodimer. The KaiABC complex composition changes during the circadian cycle to control KaiC phosphorylation. Complexes KaiC(6), KaiA(2-4):KaiC(6), KaiB(6):KaiC(6) and KaiC(6):KaiB(6):KaiA(12) are among the most important forms, many form cooperatively. KaiA and CikA bind to the same region of the KaiB(fs) form and therefore compete.

In terms of biological role, key component of the KaiABC oscillator complex, which constitutes the main circadian regulator in cyanobacteria. Complex composition changes during the circadian cycle to control KaiC phosphorylation. KaiA stimulates KaiC autophosphorylation, while KaiB sequesters KaiA, leading to KaiC autodephosphorylation. KaiA binding to the KaiC CII domain during the subjective day yields KaiA(2-4):KaiC(6) complexes which stimulate KaiC autophosphorylation. Phospho-Ser-431 KaiC accumulation triggers binding of KaiB during the subjective night to form the KaiB(6):KaiC(6) complex, leading to changes in the output regulators CikA and SasA. KaiB(6):KaiC(6) formation exposes a site for KaiA binding on KaiB that sequesters KaiA from KaiC's CII domain, making the KaiC(6):KaiB(6):KaiA(12) complex resulting in KaiC autodephosphorylation. Complete dephosphorylation of KaiC leads to dissociation of KaiA(2):KaiB(1), completing 1 cycle of the Kai oscillator. Binds oxidized quinones via the N-terminal PsR domain, allowing it to sense redox changes and possibly mediate clock input. This chain is Circadian clock oscillator protein KaiA, found in Acaryochloris marina (strain MBIC 11017).